Reading from the N-terminus, the 516-residue chain is H/ACA ribonucleoprotein complex subunit DKC1 (516 aa).

Positions 1 to 24 (MADGDGSSVKKRRKKDKRSLPDED) are disordered. The Nucleophile role is filled by Asp123. Residues 294–369 (HKRLVMKDSA…VVAKIKRVIM (76 aa)) form the PUA domain. The segment at 422-516 (KKEAAKVPQA…KQKEVEESSE (95 aa)) is disordered. A compositionally biased stretch (basic and acidic residues) spans 434–446 (EVERAPKRKRESE). Pro residues predominate over residues 453 to 464 (SPPPSPATPPPE). Positions 463–516 (PEELSKKEKKKKKKEKKAKEAAESGEEQVEVISESSAKKKKKKKKQKEVEESSE) form a coiled coil. Basic residues predominate over residues 469–478 (KEKKKKKKEK).

The protein belongs to the pseudouridine synthase TruB family. In terms of assembly, part of the H/ACA small nucleolar ribonucleoprotein (H/ACA snoRNP) complex, which contains NHP2/NOLA2, GAR1/NOLA1, NOP10/NOLA3, and DKC1/NOLA4, which is presumed to be the catalytic subunit. The complex contains a stable core formed by binding of one or two NOP10-DKC1 heterodimers to NHP2; GAR1 subsequently binds to this core via DKC1. The complex binds a box H/ACA small nucleolar RNA (snoRNA), which may target the specific site of modification within the RNA substrate.

The protein resides in the nucleus. Its subcellular location is the nucleolus. The protein localises to the cajal body. The catalysed reaction is uridine in 5S rRNA = pseudouridine in 5S rRNA. Its function is as follows. Catalytic subunit of H/ACA small nucleolar ribonucleoprotein (H/ACA snoRNP) complex, which catalyzes pseudouridylation of rRNA. This involves the isomerization of uridine such that the ribose is subsequently attached to C5, instead of the normal N1. Each rRNA can contain up to 100 pseudouridine ('psi') residues, which may serve to stabilize the conformation of rRNAs. Required for ribosome biogenesis and telomere maintenance. The protein is H/ACA ribonucleoprotein complex subunit DKC1 (DKC1) of Gallus gallus (Chicken).